Reading from the N-terminus, the 510-residue chain is Probable cytosol aminopeptidase (510 aa).

Lysine 282 and aspartate 287 together coordinate Mn(2+). The active site involves lysine 294. Mn(2+) is bound by residues aspartate 305, aspartate 364, and glutamate 366. Arginine 368 is an active-site residue.

Belongs to the peptidase M17 family. Mn(2+) serves as cofactor.

The protein resides in the cytoplasm. The enzyme catalyses Release of an N-terminal amino acid, Xaa-|-Yaa-, in which Xaa is preferably Leu, but may be other amino acids including Pro although not Arg or Lys, and Yaa may be Pro. Amino acid amides and methyl esters are also readily hydrolyzed, but rates on arylamides are exceedingly low.. It carries out the reaction Release of an N-terminal amino acid, preferentially leucine, but not glutamic or aspartic acids.. Functionally, presumably involved in the processing and regular turnover of intracellular proteins. Catalyzes the removal of unsubstituted N-terminal amino acids from various peptides. The sequence is that of Probable cytosol aminopeptidase from Cupriavidus pinatubonensis (strain JMP 134 / LMG 1197) (Cupriavidus necator (strain JMP 134)).